The sequence spans 673 residues: Glycine--tRNA ligase beta subunit (673 aa).

The protein belongs to the class-II aminoacyl-tRNA synthetase family. As to quaternary structure, tetramer of two alpha and two beta subunits.

The protein localises to the cytoplasm. The enzyme catalyses tRNA(Gly) + glycine + ATP = glycyl-tRNA(Gly) + AMP + diphosphate. The sequence is that of Glycine--tRNA ligase beta subunit from Lactococcus lactis subsp. cremoris (strain MG1363).